The chain runs to 268 residues: Tropinone reductase homolog At2g29150 (268 aa).

Residue 22-46 coordinates NADP(+); it reads LVTGGSKGLGEAVVEELAMLGARVH. S155 contributes to the substrate binding site. Catalysis depends on Y167, which acts as the Proton acceptor.

This sequence belongs to the short-chain dehydrogenases/reductases (SDR) family. SDR65C subfamily.

Functionally, enantiospecific reductase active on cyclic monoterpenes and small flexible lipophilic carbonyls. No activity with tropinone, nitrogen-containing tropinone analogs, tropine or pseudotropine as substrate. The polypeptide is Tropinone reductase homolog At2g29150 (Arabidopsis thaliana (Mouse-ear cress)).